The following is a 382-amino-acid chain: F-box protein At3g27290 (382 aa).

The F-box domain maps to 16 to 105 (RKLELGLGEF…VDQMLFETLS (90 aa)).

This is F-box protein At3g27290 from Arabidopsis thaliana (Mouse-ear cress).